Reading from the N-terminus, the 567-residue chain is Multidrug and toxin extrusion protein 1 (567 aa).

At Met-1 the chain carries N-acetylmethionine. Residues 1–37 lie on the Cytoplasmic side of the membrane; that stretch reads MERTEESAPGPGGADAASERRGLRCLLLPGFLEELRA. Ser-18 is modified (phosphoserine). A helical membrane pass occupies residues 38 to 58; sequence LLVLAGPAFLAQLMMFLISFI. Topologically, residues 59–72 are extracellular; that stretch reads SSVFCGHLGKLELD. The helical transmembrane segment at 73–93 threads the bilayer; that stretch reads AVTLAIAVINVTGISVGHGLS. Over 94-120 the chain is Cytoplasmic; sequence SACDTLISQTYGSQNLKHVGVILQRGT. Residues 121–141 form a helical membrane-spanning segment; that stretch reads LILLLCCFPCWALFINTEQIL. At 142–152 the chain is on the extracellular side; the sequence is LLFRQDPDVSR. Residues 153 to 173 form a helical membrane-spanning segment; that stretch reads LTQTYVMIFIPALPAAFLYTL. Over 174–187 the chain is Cytoplasmic; sequence QVKYLLNQGIVLPQ. Residues 188 to 208 form a helical membrane-spanning segment; it reads IMTGIAANLVNALANYVFLYH. Residues 209–216 are Extracellular-facing; it reads LHLGVMGS. The chain crosses the membrane as a helical span at residues 217–237; sequence ALANTISQFALAIFLFLYILW. Topologically, residues 238–257 are cytoplasmic; the sequence is RRLHQATWGGWSWECLQDWA. A helical membrane pass occupies residues 258-277; that stretch reads SFLRLAIPSMLMLCIEWWAY. The Extracellular segment spans residues 278-295; it reads EVGSFLSGILGMVELGAQ. Residues 296 to 316 traverse the membrane as a helical segment; it reads SITYELAIIVYMIPSGFSVAA. Residues 317 to 336 are Cytoplasmic-facing; it reads NVRVGNALGAGNIDQAKKSS. Residues 337 to 357 traverse the membrane as a helical segment; it reads AISLIVTELFAVTFCVLLLGC. Over 358-370 the chain is Extracellular; the sequence is KDLVGYIFTTDRD. The chain crosses the membrane as a helical span at residues 371–391; it reads IVALVAQVIPIYAVSHLFEGL. Over 392–408 the chain is Cytoplasmic; that stretch reads ACTCGGILRGTGNQKVG. A helical transmembrane segment spans residues 409–429; that stretch reads AIVNAIGYYVIGLPIGIALMF. Residues 430–437 are Extracellular-facing; the sequence is AAKLGVIG. The chain crosses the membrane as a helical span at residues 438–458; it reads LWSGIIICTTCQTTCFLAFIA. Residues 459–543 are Cytoplasmic-facing; the sequence is RLNWKRACQQ…LSGKQLALRR (85 aa). Residues 544–564 form a helical membrane-spanning segment; sequence GLLLLGVVLVLVGGILVRVYI. Residues 565–567 lie on the Extracellular side of the membrane; sequence RIE.

This sequence belongs to the multi antimicrobial extrusion (MATE) (TC 2.A.66.1) family. Predominantly expressed in kidney and liver. Also expressed in various cells, including brain glia-like cells and capillaries, pancreatic duct cells, urinary bladder epithelium, adrenal gland cortex, heart, stomach, small intestine, thyroid gland, testes, alpha cells of the islets of Langerhans, Leydig cells, and vitamin A-storing Ito cells. Expressed in heart, stomach, small intestine, bladder, thyroid gland, adrenal gland and testes (at protein level).

The protein resides in the cell membrane. The protein localises to the apical cell membrane. It catalyses the reaction thiamine(out) + H(+)(in) = thiamine(in) + H(+)(out). The catalysed reaction is estrone 3-sulfate(in) + H(+)(out) = estrone 3-sulfate(out) + H(+)(in). The enzyme catalyses creatinine(in) + H(+)(out) = creatinine(out) + H(+)(in). It carries out the reaction agmatine(in) + H(+)(out) = agmatine(out) + H(+)(in). Functionally, multidrug efflux pump that functions as a H(+)/organic cation antiporter. Plays a physiological role in the excretion of cationic compounds including endogenous metabolites, drugs, toxins through the kidney and liver, into urine and bile respectively. Mediates the efflux of endogenous compounds such as creatinine, vitamin B1/thiamine, agmatine and estrone-3-sulfate. May also contribute to regulate the transport of cationic compounds in testis across the blood-testis-barrier. The polypeptide is Multidrug and toxin extrusion protein 1 (Slc47a1) (Mus musculus (Mouse)).